We begin with the raw amino-acid sequence, 151 residues long: RNA polymerase-binding transcription factor DksA (151 aa).

Cys114, Cys117, Cys135, and Cys138 together coordinate Zn(2+). A dksA C4-type zinc finger spans residues 114–138 (CNSCSVEIGIRRLEARPTADLCIDC).

It belongs to the DksA family. In terms of assembly, interacts directly with the RNA polymerase.

It is found in the cytoplasm. Transcription factor that acts by binding directly to the RNA polymerase (RNAP). Required for negative regulation of rRNA expression and positive regulation of several amino acid biosynthesis promoters. Also required for regulation of fis expression. In Buchnera aphidicola subsp. Acyrthosiphon pisum (strain APS) (Acyrthosiphon pisum symbiotic bacterium), this protein is RNA polymerase-binding transcription factor DksA.